Reading from the N-terminus, the 335-residue chain is Large ribosomal subunit protein uL3 (335 aa).

The protein belongs to the universal ribosomal protein uL3 family. In terms of assembly, part of the 50S ribosomal subunit. Forms a cluster with proteins L14 and L24e.

Its function is as follows. One of the primary rRNA binding proteins, it binds directly near the 3'-end of the 23S rRNA, where it nucleates assembly of the 50S subunit. The sequence is that of Large ribosomal subunit protein uL3 from Methanocaldococcus jannaschii (strain ATCC 43067 / DSM 2661 / JAL-1 / JCM 10045 / NBRC 100440) (Methanococcus jannaschii).